Here is a 158-residue protein sequence, read N- to C-terminus: Transcription elongation factor GreA (158 aa).

Positions 14-76 form a coiled coil; it reads VKKLEEELEY…QIENMLKNAN (63 aa).

This sequence belongs to the GreA/GreB family.

Its function is as follows. Necessary for efficient RNA polymerase transcription elongation past template-encoded arresting sites. The arresting sites in DNA have the property of trapping a certain fraction of elongating RNA polymerases that pass through, resulting in locked ternary complexes. Cleavage of the nascent transcript by cleavage factors such as GreA or GreB allows the resumption of elongation from the new 3'terminus. GreA releases sequences of 2 to 3 nucleotides. The protein is Transcription elongation factor GreA of Clostridium acetobutylicum (strain ATCC 824 / DSM 792 / JCM 1419 / IAM 19013 / LMG 5710 / NBRC 13948 / NRRL B-527 / VKM B-1787 / 2291 / W).